Reading from the N-terminus, the 195-residue chain is 4'-phosphopantetheinyl transferase AcpT (195 aa).

This sequence belongs to the P-Pant transferase superfamily. Gsp/Sfp/HetI/AcpT family.

It catalyses the reaction apo-[ACP] + CoA = holo-[ACP] + adenosine 3',5'-bisphosphate + H(+). Functionally, may be involved in an alternative pathway for phosphopantetheinyl transfer and holo-ACP synthesis in E.coli. The native apo-protein substrate is unknown. Is able to functionally replace AcpS in vivo but only when expressed at high levels. The polypeptide is 4'-phosphopantetheinyl transferase AcpT (Escherichia coli (strain K12)).